A 423-amino-acid chain; its full sequence is Adenylosuccinate synthetase (423 aa).

Residues 12–18 (GDEGKGK) and 40–42 (GHT) contribute to the GTP site. Residue Asp13 is the Proton acceptor of the active site. Mg(2+) is bound by residues Asp13 and Gly40. IMP-binding positions include 13–16 (DEGK), 38–41 (NAGH), Thr128, Arg142, Gln223, Thr238, and Arg302. The active-site Proton donor is His41. 298 to 304 (TTTGRPR) contributes to the substrate binding site. GTP contacts are provided by residues Arg304, 330–332 (RLD), and 412–414 (CIG).

The protein belongs to the adenylosuccinate synthetase family. Homodimer. Mg(2+) serves as cofactor.

It localises to the cytoplasm. It carries out the reaction IMP + L-aspartate + GTP = N(6)-(1,2-dicarboxyethyl)-AMP + GDP + phosphate + 2 H(+). It functions in the pathway purine metabolism; AMP biosynthesis via de novo pathway; AMP from IMP: step 1/2. Functionally, plays an important role in the de novo pathway of purine nucleotide biosynthesis. Catalyzes the first committed step in the biosynthesis of AMP from IMP. The polypeptide is Adenylosuccinate synthetase (Dehalococcoides mccartyi (strain ATCC BAA-2266 / KCTC 15142 / 195) (Dehalococcoides ethenogenes (strain 195))).